Consider the following 89-residue polypeptide: Small ribosomal subunit protein uS15 (89 aa).

Belongs to the universal ribosomal protein uS15 family. In terms of assembly, part of the 30S ribosomal subunit. Forms a bridge to the 50S subunit in the 70S ribosome, contacting the 23S rRNA.

One of the primary rRNA binding proteins, it binds directly to 16S rRNA where it helps nucleate assembly of the platform of the 30S subunit by binding and bridging several RNA helices of the 16S rRNA. Its function is as follows. Forms an intersubunit bridge (bridge B4) with the 23S rRNA of the 50S subunit in the ribosome. The polypeptide is Small ribosomal subunit protein uS15 (Porphyromonas gingivalis (strain ATCC 33277 / DSM 20709 / CIP 103683 / JCM 12257 / NCTC 11834 / 2561)).